We begin with the raw amino-acid sequence, 219 residues long: Protein OPG170 (219 aa).

The signal sequence occupies residues 1 to 16 (MYSLLFIILMCIPFSF). A glycan (N-linked (GlcNAc...) asparagine; by host) is linked at N70.

This sequence belongs to the orthopoxvirus OPG170 family.

The protein resides in the secreted. In terms of biological role, may interact with several cellular chemokines to interfere with chemokine-glycosaminoglycan (GAG) interactions at the cell surface to alter chemotaxis of nearby responsive cells. This chain is Protein OPG170 (OPG170), found in Vaccinia virus (strain Copenhagen) (VACV).